Reading from the N-terminus, the 206-residue chain is Large ribosomal subunit protein uL4 (206 aa).

The protein belongs to the universal ribosomal protein uL4 family. Part of the 50S ribosomal subunit.

In terms of biological role, one of the primary rRNA binding proteins, this protein initially binds near the 5'-end of the 23S rRNA. It is important during the early stages of 50S assembly. It makes multiple contacts with different domains of the 23S rRNA in the assembled 50S subunit and ribosome. Its function is as follows. Forms part of the polypeptide exit tunnel. This is Large ribosomal subunit protein uL4 from Rhodopseudomonas palustris (strain ATCC BAA-98 / CGA009).